The following is a 496-amino-acid chain: Probable cytosol aminopeptidase (496 aa).

Residues Lys-258 and Asp-263 each contribute to the Mn(2+) site. Residue Lys-270 is part of the active site. The Mn(2+) site is built by Asp-281, Asp-340, and Glu-342. Arg-344 is a catalytic residue.

Belongs to the peptidase M17 family. It depends on Mn(2+) as a cofactor.

The protein resides in the cytoplasm. The catalysed reaction is Release of an N-terminal amino acid, Xaa-|-Yaa-, in which Xaa is preferably Leu, but may be other amino acids including Pro although not Arg or Lys, and Yaa may be Pro. Amino acid amides and methyl esters are also readily hydrolyzed, but rates on arylamides are exceedingly low.. The enzyme catalyses Release of an N-terminal amino acid, preferentially leucine, but not glutamic or aspartic acids.. Functionally, presumably involved in the processing and regular turnover of intracellular proteins. Catalyzes the removal of unsubstituted N-terminal amino acids from various peptides. This chain is Probable cytosol aminopeptidase, found in Helicobacter pylori (strain P12).